The chain runs to 70 residues: Turripeptide Gsg9.2 (70 aa).

A signal peptide spans 1 to 20; it reads MKVYCLLLVLLVGLVSQAHG. The Kazal-like domain maps to 21-70; the sequence is QLDKKCQMVCTMDYRPVCGSDGRTYPNKCTLTSTACMSQRSITVFHDGEC. 3 disulfide bridges follow: cysteine 26-cysteine 56, cysteine 30-cysteine 49, and cysteine 38-cysteine 70.

This sequence belongs to the conopeptide P-like superfamily. In terms of tissue distribution, expressed by the venom duct.

The protein localises to the secreted. Functionally, acts as a neurotoxin by inhibiting an ion channel. May also act as a serine protease inhibitor, since it possess the kazal serine protease inhibitor signature. In Gemmula sogodensis (Gem-turris), this protein is Turripeptide Gsg9.2.